A 466-amino-acid polypeptide reads, in one-letter code: Clusterin-like protein 1 (466 aa).

Positions 1–20 are cleaved as a signal peptide; the sequence is MKPPLLVFIVCLLWLKDSHC. The stretch at 57-111 forms a coiled coil; that stretch reads KQMKIMMERKEKEHTNLMSTLKKCREEKQEALKLLNEVQEHLEEEERLCRESLAD. 5 disulfide bridges follow: C105–C333, C116–C325, C119–C322, C124–C315, and C131–C305. N196, N257, N311, N351, N412, and N431 each carry an N-linked (GlcNAc...) asparagine glycan.

It belongs to the clusterin family.

The protein resides in the secreted. The protein is Clusterin-like protein 1 (CLUL1) of Homo sapiens (Human).